The sequence spans 358 residues: Oxidase FUB9 (358 aa).

Positions 6–350 (SSKPQIFSIQ…SPAHLSILNA (345 aa)) constitute an FMN hydroxy acid dehydrogenase domain. A 2-oxocarboxylate is bound at residue Tyr32. The FMN site is built by Ser114, Gln138, and Thr166. Arg175 is a binding site for a 2-oxocarboxylate. Residue Lys221 coordinates FMN. Catalysis depends on His245, which acts as the Proton acceptor. Residue Arg248 participates in a 2-oxocarboxylate binding. Residues 276-280 (DGGFR) and 299-300 (GR) each bind FMN.

The protein belongs to the FMN-dependent alpha-hydroxy acid dehydrogenase family. The cofactor is FMN.

It functions in the pathway mycotoxin biosynthesis. Functionally, oxidase; part of the gene cluster that mediates the biosynthesis of fusaric acid, a mycotoxin with low to moderate toxicity to animals and humans, but with high phytotoxic properties. L-aspartate is suggested as fusaric acid amino acid precursor that is activated and further processed to O-acetyl-L-homoserine by cluster enzymes aspartate kinase FUB3 and homoserine O-acetyltransferase FUB5, as well as enzymes of the primary metabolism. The polyketide synthase (PKS) FUB1 generates the triketide trans-2-hexenal which is presumptively released by the hydrolase FUB4 and linked to the NRPS-bound amino acid precursor by NAD(P)-dependent dehydrogenase FUB6. FUB1, FUB4, and the non-canonical NRPS Fub8 may form an enzyme complex. Further processing of the NRPS-bound intermediate might be carried out by FUB6 and the sulfhydrylase FUB7, enabling a spontaneous electrocyclization to close the carbon backbone of fusaric acid. Dihydrofusaric acid is likely to be released via reduction by the thioester reductase (TR) domain of FUB8 whereupon the final oxidation to fusaric acid may (also) be performed by the FMN-dependent dehydrogenase FUB9. This chain is Oxidase FUB9, found in Gibberella fujikuroi (strain CBS 195.34 / IMI 58289 / NRRL A-6831) (Bakanae and foot rot disease fungus).